The primary structure comprises 504 residues: Putative BTB/POZ domain-containing protein R842 (504 aa).

The BTB domain maps to 21-91 (SDVKLILKDN…FYGFKSPSVT (71 aa)).

Belongs to the mimivirus BTB/WD family.

In Acanthamoeba polyphaga (Amoeba), this protein is Putative BTB/POZ domain-containing protein R842.